We begin with the raw amino-acid sequence, 884 residues long: Alanine--tRNA ligase (884 aa).

4 residues coordinate Zn(2+): His562, His566, Cys674, and His678.

Belongs to the class-II aminoacyl-tRNA synthetase family. It depends on Zn(2+) as a cofactor.

It localises to the cytoplasm. It carries out the reaction tRNA(Ala) + L-alanine + ATP = L-alanyl-tRNA(Ala) + AMP + diphosphate. Catalyzes the attachment of alanine to tRNA(Ala) in a two-step reaction: alanine is first activated by ATP to form Ala-AMP and then transferred to the acceptor end of tRNA(Ala). Also edits incorrectly charged Ser-tRNA(Ala) and Gly-tRNA(Ala) via its editing domain. This is Alanine--tRNA ligase from Rhizobium johnstonii (strain DSM 114642 / LMG 32736 / 3841) (Rhizobium leguminosarum bv. viciae).